The following is a 277-amino-acid chain: Undecaprenyl-diphosphatase 1 (277 aa).

The next 7 helical transmembrane spans lie at 46–66 (VVGF…VYFF), 95–115 (WWVI…KSLI), 119–139 (LASL…MWAA), 165–185 (ILAL…TALI), 191–211 (VAAT…AGLY), 216–236 (ALGT…SFVV), and 256–276 (FVIY…TGVL).

Belongs to the UppP family.

The protein resides in the cell membrane. It catalyses the reaction di-trans,octa-cis-undecaprenyl diphosphate + H2O = di-trans,octa-cis-undecaprenyl phosphate + phosphate + H(+). Catalyzes the dephosphorylation of undecaprenyl diphosphate (UPP). Confers resistance to bacitracin. The chain is Undecaprenyl-diphosphatase 1 from Streptomyces avermitilis (strain ATCC 31267 / DSM 46492 / JCM 5070 / NBRC 14893 / NCIMB 12804 / NRRL 8165 / MA-4680).